The sequence spans 748 residues: Cytosolic phospholipase A2 (748 aa).

Residues 1-178 are phospholipid binding; it reads MSFIDPYQHI…MKSFLGEENS (178 aa). The C2 domain maps to 6–124; the sequence is PYQHIVVEHQ…GEKKEVQLTF (119 aa). D40, T41, D43, N65, D93, A94, and N95 together coordinate Ca(2+). One can recognise a PLA2c domain in the interval 138–740; sequence VCSSTDLRFS…SSVEARRFFN (603 aa). The Nucleophile role is filled by S228. Residues 431-459 are disordered; the sequence is SNDSSDSEDESQHPKGTENSEANEEYQNS. The segment covering 449-459 has biased composition (polar residues); that stretch reads NSEANEEYQNS. S505 is modified (phosphoserine; by MAPK). Catalysis depends on D549, which acts as the Proton acceptor.

Activated by phosphorylation on a serine residue.

It is found in the cytoplasm. It localises to the cytoplasmic vesicle. It catalyses the reaction a 1,2-diacyl-sn-glycero-3-phosphocholine + H2O = a 1-acyl-sn-glycero-3-phosphocholine + a fatty acid + H(+). It carries out the reaction a 1-acyl-sn-glycero-3-phosphocholine + H2O = sn-glycerol 3-phosphocholine + a fatty acid + H(+). Its activity is regulated as follows. Stimulated by agonists such as ATP, EGF, thrombin and bradykinin as well as by cytosolic Ca(2+). Functionally, selectively hydrolyzes arachidonyl phospholipids in the sn-2 position releasing arachidonic acid. Together with its lysophospholipid activity, it is implicated in the initiation of the inflammatory response. This Gallus gallus (Chicken) protein is Cytosolic phospholipase A2 (PLA2G4A).